The following is a 152-amino-acid chain: UPF0178 protein swp_1285 (152 aa).

Belongs to the UPF0178 family.

This Shewanella piezotolerans (strain WP3 / JCM 13877) protein is UPF0178 protein swp_1285.